A 352-amino-acid polypeptide reads, in one-letter code: Probable protein phosphatase 2C 56 (352 aa).

2 disordered regions span residues 18–37 (RGRR…ASRG) and 53–87 (SSSS…ITGG). 2 stretches are compositionally biased toward low complexity: residues 23–37 (AASP…ASRG) and 53–75 (SSSS…ARTR). A PPM-type phosphatase domain is found at 96 to 343 (SWDYSSFKGR…DNITCIVLQF (248 aa)). Residues D132, G133, D295, and D334 each coordinate Mn(2+).

Belongs to the PP2C family. Mg(2+) serves as cofactor. It depends on Mn(2+) as a cofactor.

The enzyme catalyses O-phospho-L-seryl-[protein] + H2O = L-seryl-[protein] + phosphate. The catalysed reaction is O-phospho-L-threonyl-[protein] + H2O = L-threonyl-[protein] + phosphate. This is Probable protein phosphatase 2C 56 from Oryza sativa subsp. japonica (Rice).